The sequence spans 766 residues: Subtilisin-like protease SBT4.15 (766 aa).

The signal sequence occupies residues 1–23 (MVSNQRVRLFMLCFCLVNNAVIA). A propeptide spans 24 to 113 (ATEDENVERK…VFKNTQRQLH (90 aa)) (activation peptide). The Inhibitor I9 domain occupies 35–113 (YIVYMGEATE…VFKNTQRQLH (79 aa)). Positions 117 to 601 (SWDFLGLVES…SGQINPRRAI (485 aa)) constitute a Peptidase S8 domain. Asp144 acts as the Charge relay system in catalysis. Asn175 is a glycosylation site (N-linked (GlcNAc...) asparagine). Residue His210 is the Charge relay system of the active site. 3 N-linked (GlcNAc...) asparagine glycosylation sites follow: Asn233, Asn376, and Asn465. The PA domain maps to 365-460 (MYPLTSGSLA…YVFFEDGTKI (96 aa)). Ser543 serves as the catalytic Charge relay system. N-linked (GlcNAc...) asparagine glycosylation is found at Asn624, Asn638, and Asn668.

It belongs to the peptidase S8 family. In terms of processing, the C-terminal propeptide is autocleaved.

The protein localises to the secreted. This is Subtilisin-like protease SBT4.15 from Arabidopsis thaliana (Mouse-ear cress).